The chain runs to 83 residues: Cytochrome c-554(548) (83 aa).

Positions 14, 17, 18, and 63 each coordinate heme c.

Homodimer. Post-translationally, binds 1 heme c group covalently per subunit.

This is Cytochrome c-554(548) from Halomonas halodenitrificans (strain ATCC 12084 / NCIMB 8669) (Paracoccus halodenitrificans).